We begin with the raw amino-acid sequence, 237 residues long: RING finger protein vilya (237 aa).

The RING-type zinc-finger motif lies at cysteine 21 to arginine 69. Positions methionine 172–leucine 237 are disordered. The segment covering arginine 180 to serine 195 has biased composition (low complexity). Positions arginine 221–leucine 237 are enriched in polar residues.

In terms of assembly, may interact with itself and with narya and nenya through their RING-type zinc fingers. As to expression, expressed in nurse cell and pro-oocytes (at protein level).

It localises to the chromosome. Its function is as follows. Required for the formation of DNA double-strand breaks during meiosis together with narya and nenya. This is RING finger protein vilya from Drosophila melanogaster (Fruit fly).